The primary structure comprises 335 residues: Glycerol-3-phosphate dehydrogenase [NAD(P)+] (335 aa).

NADPH-binding residues include Ser12, Trp13, Arg33, Arg34, and Lys107. Sn-glycerol 3-phosphate-binding residues include Lys107, Gly134, and Ser136. Position 138 (Ala138) interacts with NADPH. Lys189, Asp242, Ser252, Arg253, and Asn254 together coordinate sn-glycerol 3-phosphate. Lys189 acts as the Proton acceptor in catalysis. Position 253 (Arg253) interacts with NADPH. Residues Val277 and Glu279 each contribute to the NADPH site.

The protein belongs to the NAD-dependent glycerol-3-phosphate dehydrogenase family.

Its subcellular location is the cytoplasm. The catalysed reaction is sn-glycerol 3-phosphate + NAD(+) = dihydroxyacetone phosphate + NADH + H(+). It carries out the reaction sn-glycerol 3-phosphate + NADP(+) = dihydroxyacetone phosphate + NADPH + H(+). It functions in the pathway membrane lipid metabolism; glycerophospholipid metabolism. In terms of biological role, catalyzes the reduction of the glycolytic intermediate dihydroxyacetone phosphate (DHAP) to sn-glycerol 3-phosphate (G3P), the key precursor for phospholipid synthesis. This is Glycerol-3-phosphate dehydrogenase [NAD(P)+] from Moorella thermoacetica (strain ATCC 39073 / JCM 9320).